A 366-amino-acid polypeptide reads, in one-letter code: Histidinol-phosphate aminotransferase (366 aa).

N6-(pyridoxal phosphate)lysine is present on lysine 222.

It belongs to the class-II pyridoxal-phosphate-dependent aminotransferase family. Histidinol-phosphate aminotransferase subfamily. As to quaternary structure, homodimer. Requires pyridoxal 5'-phosphate as cofactor.

It catalyses the reaction L-histidinol phosphate + 2-oxoglutarate = 3-(imidazol-4-yl)-2-oxopropyl phosphate + L-glutamate. The protein operates within amino-acid biosynthesis; L-histidine biosynthesis; L-histidine from 5-phospho-alpha-D-ribose 1-diphosphate: step 7/9. This chain is Histidinol-phosphate aminotransferase, found in Lysinibacillus sphaericus (strain C3-41).